A 67-amino-acid chain; its full sequence is Large ribosomal subunit protein bL35 (67 aa).

This sequence belongs to the bacterial ribosomal protein bL35 family.

This is Large ribosomal subunit protein bL35 from Leptospira borgpetersenii serovar Hardjo-bovis (strain JB197).